A 200-amino-acid chain; its full sequence is Bombinin-like peptides 3 (200 aa).

The or 18 signal peptide spans 1 to 16 (MNFKYIVAVSILIASA). Phenylalanine amide occurs at positions 68 and 129.

It belongs to the bombinin family. Expressed by the skin glands.

It is found in the secreted. Has antimicrobial activity, but no hemolytic activity. Preference on killing Gram-negative non-enteric bacteria. This Bombina orientalis (Oriental fire-bellied toad) protein is Bombinin-like peptides 3.